The sequence spans 201 residues: dTTP/UTP pyrophosphatase (201 aa).

The active-site Proton acceptor is Asp-75.

Belongs to the Maf family. YhdE subfamily. A divalent metal cation serves as cofactor.

It is found in the cytoplasm. The enzyme catalyses dTTP + H2O = dTMP + diphosphate + H(+). It catalyses the reaction UTP + H2O = UMP + diphosphate + H(+). Functionally, nucleoside triphosphate pyrophosphatase that hydrolyzes dTTP and UTP. May have a dual role in cell division arrest and in preventing the incorporation of modified nucleotides into cellular nucleic acids. The chain is dTTP/UTP pyrophosphatase from Pseudomonas fluorescens (strain ATCC BAA-477 / NRRL B-23932 / Pf-5).